The chain runs to 416 residues: Serine hydroxymethyltransferase (416 aa).

(6S)-5,6,7,8-tetrahydrofolate is bound by residues L117 and 121–123 (GHL). An N6-(pyridoxal phosphate)lysine modification is found at K225. 351–353 (SPF) provides a ligand contact to (6S)-5,6,7,8-tetrahydrofolate.

The protein belongs to the SHMT family. Homodimer. Pyridoxal 5'-phosphate serves as cofactor.

It is found in the cytoplasm. It catalyses the reaction (6R)-5,10-methylene-5,6,7,8-tetrahydrofolate + glycine + H2O = (6S)-5,6,7,8-tetrahydrofolate + L-serine. It functions in the pathway one-carbon metabolism; tetrahydrofolate interconversion. It participates in amino-acid biosynthesis; glycine biosynthesis; glycine from L-serine: step 1/1. Functionally, catalyzes the reversible interconversion of serine and glycine with tetrahydrofolate (THF) serving as the one-carbon carrier. This reaction serves as the major source of one-carbon groups required for the biosynthesis of purines, thymidylate, methionine, and other important biomolecules. Also exhibits THF-independent aldolase activity toward beta-hydroxyamino acids, producing glycine and aldehydes, via a retro-aldol mechanism. The sequence is that of Serine hydroxymethyltransferase from Blochmanniella pennsylvanica (strain BPEN).